Reading from the N-terminus, the 154-residue chain is MAFKEKVKELLEQGLAEYPNLFLIDLNINDSNKIIITLDGDNGVQLQDCINISRSIDNNLDREEVDFALEVASAGVSLPLKLVRQYKKNIGRTLKIKTATQTIEALLLEVSDQDITVEWSSREPKKIGKGKETVVHNEKIAYAAIQEAIVIIIF.

The protein belongs to the RimP family.

It is found in the cytoplasm. In terms of biological role, required for maturation of 30S ribosomal subunits. The sequence is that of Ribosome maturation factor RimP from Flavobacterium psychrophilum (strain ATCC 49511 / DSM 21280 / CIP 103535 / JIP02/86).